Consider the following 227-residue polypeptide: 27 kDa glycoprotein (227 aa).

A signal peptide spans 1–17 (MMWKTVLITIFAAGVLA). 2 N-linked (GlcNAc...) asparagine glycosylation sites follow: N118 and N173.

Belongs to the UPF0408 family. Expressed in the subesophageal body, fat bodies, hemocytes, midgut and Malpighian tubules. Not expressed in silk glands.

It is found in the secreted. In Bombyx mori (Silk moth), this protein is 27 kDa glycoprotein.